The sequence spans 944 residues: Calcium-transporting ATPase type 2C member 2 (944 aa).

The Cytoplasmic segment spans residues 1–104 (MGRRFKFLQK…DNTEPVWKKY (104 aa)). The tract at residues 69-93 (VDLDSGLSEFAVAQRRLVHGWNEFV) is interaction with ORAI1. Residues 105-125 (LDQFRNPLILLLLGSSVVSVL) form a helical membrane-spanning segment. Over 126-127 (TK) the chain is Extracellular. A helical transmembrane segment spans residues 128-148 (EYEDAISIALAVLIVVTVGFI). The Cytoplasmic segment spans residues 149 to 229 (QEYRSEKSLE…EVEPCSKTDS (81 aa)). Residues 230 to 250 (PLAGGGDLSTLSNVVFMGTLV) traverse the membrane as a helical segment. Over 251-291 (QCGKGQGVVIGTGEQSQFGEVFKMMRAEETPKTPLQKSMDK) the chain is Extracellular. Threonine 262 bears the Phosphothreonine mark. Serine 266 is subject to Phosphoserine. Residues 292 to 312 (LGKQLTVFSFGIIGLLMLVGW) traverse the membrane as a helical segment. Residues 313–329 (VQGKPLLSMFTIGVSLA) lie on the Cytoplasmic side of the membrane. Ca(2+)-binding residues include valine 330, alanine 331, isoleucine 333, and glutamate 335. A helical membrane pass occupies residues 330–350 (VAAIPEGLPIVVMVTLVLGVL). Residues 351–748 (RMAKKRVIVK…IAALSLITLS (398 aa)) lie on the Extracellular side of the membrane. Aspartate 377 functions as the 4-aspartylphosphate intermediate in the catalytic mechanism. 2 residues coordinate Mg(2+): aspartate 672 and aspartate 676. The chain crosses the membrane as a helical span at residues 749-769 (TVCNLPNPLNAMQILWVNIIM). Asparagine 766 and aspartate 770 together coordinate Ca(2+). Over 770 to 802 (DGPPAQSLGVEPVDRDALKRPPRSVKDTILNRA) the chain is Cytoplasmic. The chain crosses the membrane as a helical span at residues 803 to 823 (LILKILMSAAVILGGTLFIFW). Topologically, residues 824–835 (REIPENRTSTPR) are extracellular. A helical membrane pass occupies residues 836-853 (TTTMAFTCFVFFDLFNAL). Over 854-872 (SCRSQTKLIFEIGFFRNRM) the chain is Cytoplasmic. The helical transmembrane segment at 873–893 (FLYSILGSLLGQLAVIYAPPL) threads the bilayer. Over 894–903 (QKVFQTENLS) the chain is Extracellular. A helical membrane pass occupies residues 904–924 (ALDLLLLTGLASSVFILSELL). Over 925 to 944 (KLCEKFCSRAKADQMLPEAV) the chain is Cytoplasmic.

This sequence belongs to the cation transport ATPase (P-type) (TC 3.A.3) family. Type IIA subfamily. Interacts (via N-terminus) with ORAI1 (via N- and C-termini); this interaction regulates Ca(2+) influx at the plasma membrane.

It is found in the golgi apparatus. Its subcellular location is the trans-Golgi network membrane. The protein localises to the cell membrane. It localises to the basolateral cell membrane. The enzyme catalyses Ca(2+)(in) + ATP + H2O = Ca(2+)(out) + ADP + phosphate + H(+). It catalyses the reaction Mn(2+)(in) + ATP + H2O = Mn(2+)(out) + ADP + phosphate + H(+). In terms of biological role, ATP-driven pump that supplies the Golgi apparatus with Ca(2+) and Mn(2+) ions, both essential cofactors for processing and trafficking of newly synthesized proteins in the secretory pathway. Within a catalytic cycle, acquires Ca(2+) or Mn(2+) ions on the cytoplasmic side of the membrane and delivers them to the lumenal side. The transfer of ions across the membrane is coupled to ATP hydrolysis and is associated with a transient phosphorylation that shifts the pump conformation from inward-facing to outward-facing state. Induces Ca(2+) influx independently of its ATP-driven pump function. At the basolateral membrane of mammary epithelial cells, interacts with Ca(2+) channel ORAI1 and mediates Ca(2+) entry independently of the Ca(2+) content of endoplasmic reticulum or Golgi stores. May facilitate transepithelial transport of large quantities of Ca(2+) for milk secretion via activation of Ca(2+) influx channels at the plasma membrane and active Ca(2+) transport at the Golgi apparatus. The sequence is that of Calcium-transporting ATPase type 2C member 2 (Atp2c2) from Rattus norvegicus (Rat).